The following is a 113-amino-acid chain: Dynein light chain Tctex-type 1 (113 aa).

Position 1 is an N-acetylmethionine (Met1). Residues 41–113 are interaction with GNB1; sequence QWTTNVVEQT…CIVSAFGLSI (73 aa).

Belongs to the dynein light chain Tctex-type family. As to quaternary structure, homodimer. The cytoplasmic dynein 1 complex consists of two catalytic heavy chains (HCs) and a number of non-catalytic subunits presented by intermediate chains (ICs), light intermediate chains (LICs) and light chains (LCs); the composition seems to vary in respect to the IC, LIC and LC composition. The heavy chain homodimer serves as a scaffold for the probable homodimeric assembly of the non-catalytic subunits. The ICs and LICs bind directly to the HC dimer and the LCs assemble on the IC dimer. DYNLT1 and DYNLT3 compete for association with dynein IC (DYNC1I1 or DYNC1I2). Self-associates. Interacts with RHO. Interacts with DYNC1I1 and DYNC1I2. Interacts with DOC2A, DOC2B and SCN10A. Interacts with PVR. Interacts with SVIL isoform 2. Interacts with GNB1; the interaction occurs in presence of guanine nucleotide-binding protein G(T) subunit gamma; the interaction diminishes the association of DYNLT1 with dynein IC (DYNC1I1 or DYNC1I2). Interacts with GNB2, GNB3 and GNB5; the interactions occur in presence of guanine nucleotide-binding protein G(T) subunit gamma. Interacts with ACVR2B and ARHGEF2. Interacts with DNAI4. Interacts with CFAP61. Post-translationally, phosphorylated by BMPR2. The phosphorylation status is proposed to regulate the association with the cytoplasmic dynein complex and may have role in cytoplasmic dynein cargo release.

It localises to the golgi apparatus. The protein localises to the cytoplasm. The protein resides in the cytoskeleton. Its subcellular location is the spindle. In terms of biological role, acts as one of several non-catalytic accessory components of the cytoplasmic dynein 1 complex that are thought to be involved in linking dynein to cargos and to adapter proteins that regulate dynein function. Cytoplasmic dynein 1 acts as a motor for the intracellular retrograde motility of vesicles and organelles along microtubules. Binds to transport cargos and is involved in apical cargo transport such as rhodopsin-bearing vesicles in polarized epithelia. May also be a accessory component of axonemal dynein. Functionally, plays a role in neuronal morphogenesis; the function is independent of cytoplasmic dynein and seems to be coupled to regulation of the actin cytoskeleton by enhancing Rac1 activity. The function in neurogenesis may be regulated by association with a G-protein beta-gamma dimer. May function as a receptor-independent activator of heterotrimeric G-protein signaling; the activation appears to be independent of a nucleotide exchange. Plays a role in regulating neurogenesis; inhibits the genesis of neurons from precursor cells during cortical development presumably by antagonizing ARHGEF2. Involved in the regulation of mitotic spindle orientation. Unrelated to the role in retrograde microtubule-associated movement may play a role in the dimerization of cytoplasmic proteins/domains such as for ACVR2B. Binds to the cytoplasmic domain of ACVR2B and, in vitro, inhibits ACVR2B signaling. The chain is Dynein light chain Tctex-type 1 (DYNLT1) from Bos taurus (Bovine).